The primary structure comprises 913 residues: Clumping factor B (913 aa).

An N-terminal signal peptide occupies residues 1–44 (MKKRIDYLSNKQNKYSIRRFTVGTTSVIVGATILFGIGNHQAQA). Positions 15 to 26 (YSIRRFTVGTTS) match the YSIRK-G/S signaling motif motif. Composition is skewed to polar residues over residues 44 to 61 (ASEQSNDTTQSSKNNASA) and 68 to 95 (MIETPQLNTTANDTSDISANTNSANVDS). The tract at residues 44–192 (ASEQSNDTTQ…QGTSKPSVRT (149 aa)) is disordered. Residues 45 to 542 (SEQSNDTTQS…GSADGDSAVN (498 aa)) form a ligand binding A region region. The span at 96-119 (TTKPMSTQTSNTTTTEPASTNETP) shows a compositional bias: low complexity. Residues 120 to 189 (QPTAIKNQAT…SNAQGTSKPS (70 aa)) show a composition bias toward polar residues. The MIDAS-like motif motif lies at 272-276 (DYSNS). Residues 530-885 (YGGGSADGDS…ETGDKSENTN (356 aa)) form a disordered region. Residues 545–555 (DPTPGPPVDPE) show a composition bias toward pro residues. Residues 556 to 837 (PSPDPEPEPT…SDSDSDSDSD (282 aa)) are compositionally biased toward acidic residues. Residues 841–852 (RVTPPNNEQKAP) are compositionally biased toward polar residues. Residues 869-882 (HKTDALPETGDKSE) are compositionally biased toward basic and acidic residues. The short motif at 874–878 (LPETG) is the LPXTG sorting signal element. Residue Thr-877 is modified to Pentaglycyl murein peptidoglycan amidated threonine. Positions 878–913 (GDKSENTNATLFGAMMALLGSLLLFRKRKQDHKEKA) are cleaved as a propeptide — removed by sortase.

It belongs to the serine-aspartate repeat-containing protein (SDr) family. Post-translationally, proteolytically cleaved by aureolysin (aur). This cleavage leads to the inactivation of ClfB.

Its subcellular location is the secreted. The protein localises to the cell wall. Cell surface-associated protein implicated in virulence by promoting bacterial attachment to both alpha- and beta-chains of human fibrinogen and inducing the formation of bacterial clumps. The polypeptide is Clumping factor B (clfB) (Staphylococcus aureus (strain COL)).